Consider the following 110-residue polypeptide: uncharacterized protein (110 aa).

A run of 3 helical transmembrane segments spans residues 4–26 (LVGG…KSIN), 46–68 (ANRY…GLLL), and 72–91 (LFIL…FMLT).

It localises to the cell membrane. This is an uncharacterized protein from Bacillus subtilis (strain 168).